We begin with the raw amino-acid sequence, 486 residues long: Betaine aldehyde dehydrogenase (486 aa).

Thr23 and Asp90 together coordinate K(+). 147 to 149 (GAW) contacts NAD(+). Lys159 serves as the catalytic Charge relay system. NAD(+) contacts are provided by residues 173–176 (KPSE) and 226–229 (ESGT). Leu241 contacts K(+). Catalysis depends on Glu247, which acts as the Proton acceptor. NAD(+) is bound by residues Gly249, Cys281, and Glu382. Cys281 (nucleophile) is an active-site residue. Position 281 is a cysteine sulfenic acid (-SOH) (Cys281). Residues Lys452 and Gly455 each contribute to the K(+) site. Glu459 serves as the catalytic Charge relay system.

It belongs to the aldehyde dehydrogenase family. As to quaternary structure, dimer of dimers. K(+) is required as a cofactor.

The enzyme catalyses betaine aldehyde + NAD(+) + H2O = glycine betaine + NADH + 2 H(+). It participates in amine and polyamine biosynthesis; betaine biosynthesis via choline pathway; betaine from betaine aldehyde: step 1/1. Functionally, involved in the biosynthesis of the osmoprotectant glycine betaine. Catalyzes the irreversible oxidation of betaine aldehyde to the corresponding acid. This chain is Betaine aldehyde dehydrogenase, found in Vibrio vulnificus (strain YJ016).